A 101-amino-acid chain; its full sequence is UPF0473 protein MGAS10750_Spy1887 (101 aa).

This sequence belongs to the UPF0473 family.

In Streptococcus pyogenes serotype M4 (strain MGAS10750), this protein is UPF0473 protein MGAS10750_Spy1887.